The chain runs to 496 residues: MAVELKELTKRSENYSQWYNDLVVKADLAEQSPVRGCMVIKPYGYAIWEKMQRQLDDMFKETGHVNAYFPLLIPKSYLSREAEHVEGFAKECAVVTHYRLKNAEDGSGVIVDPAAKLEEELIIRPTSETIIWSTYKNWINSYRDLPILCNQWANVMRWEMRTRLFLRTAEFLWQEGHTAHATREEAEAEAQKMLHVYGDFAEKYMAVPVIKGVKSANERFAGALDTYTIEGLMQDGKALQCGTSHFLGQNFAKAFNVQFVDKNNKLDYVWATSWGVSTRLMGALIMTHSDDNGLVLPPHLAPIQVVIVPIYKNDEMLKKIDAKVEGIVNKLKAMGISVKYDNADNKRPGFKFADYELKGVPVRLVMGGRDLENNTMEVMRRDTLEKETRSCDGIEEYVQQLLEDIQNNIYQKALNYRNEHIVKVDSYDDFKEQIEKGGFILAHWDGTPETEDRIKEETKATIRCLPFDADEESLTPGKCMVTGKPSARRVLFARAY.

This sequence belongs to the class-II aminoacyl-tRNA synthetase family. ProS type 3 subfamily. Homodimer.

It is found in the cytoplasm. The enzyme catalyses tRNA(Pro) + L-proline + ATP = L-prolyl-tRNA(Pro) + AMP + diphosphate. Catalyzes the attachment of proline to tRNA(Pro) in a two-step reaction: proline is first activated by ATP to form Pro-AMP and then transferred to the acceptor end of tRNA(Pro). The polypeptide is Proline--tRNA ligase (Phocaeicola vulgatus (strain ATCC 8482 / DSM 1447 / JCM 5826 / CCUG 4940 / NBRC 14291 / NCTC 11154) (Bacteroides vulgatus)).